The following is a 172-amino-acid chain: Protein sym-1 (172 aa).

Transmembrane regions (helical) follow at residues 13–33 (PLLT…VAAQ), 52–72 (MVLY…RFLQ), 94–114 (GLFA…LEGT), 128–148 (LSTN…VVPL), and 152–172 (VLFV…LNGQ).

It belongs to the peroxisomal membrane protein PXMP2/4 family.

It localises to the mitochondrion inner membrane. In terms of biological role, may be involved in cellular response to stress. Required to maintain mitochondrial DNA (mtDNA) integrity and stability. The sequence is that of Protein sym-1 (sym-1) from Neurospora crassa (strain ATCC 24698 / 74-OR23-1A / CBS 708.71 / DSM 1257 / FGSC 987).